Consider the following 37-residue polypeptide: Photosystem I reaction center subunit VIII (37 aa).

A helical transmembrane segment spans residues 10 to 30 (IFVPLVGLVFPAIAMASLSLY).

Belongs to the PsaI family.

The protein resides in the plastid. Its subcellular location is the chloroplast thylakoid membrane. In terms of biological role, may help in the organization of the PsaL subunit. This Gossypium hirsutum (Upland cotton) protein is Photosystem I reaction center subunit VIII.